The following is a 470-amino-acid chain: 3-isopropylmalate dehydratase large subunit (470 aa).

3 residues coordinate [4Fe-4S] cluster: C348, C409, and C412.

This sequence belongs to the aconitase/IPM isomerase family. LeuC type 1 subfamily. In terms of assembly, heterodimer of LeuC and LeuD. [4Fe-4S] cluster serves as cofactor.

The enzyme catalyses (2R,3S)-3-isopropylmalate = (2S)-2-isopropylmalate. Its pathway is amino-acid biosynthesis; L-leucine biosynthesis; L-leucine from 3-methyl-2-oxobutanoate: step 2/4. Catalyzes the isomerization between 2-isopropylmalate and 3-isopropylmalate, via the formation of 2-isopropylmaleate. The protein is 3-isopropylmalate dehydratase large subunit of Acidithiobacillus ferrooxidans (strain ATCC 23270 / DSM 14882 / CIP 104768 / NCIMB 8455) (Ferrobacillus ferrooxidans (strain ATCC 23270)).